We begin with the raw amino-acid sequence, 353 residues long: MSIIELKNVDVDFPQKKGKLVKAVNSVSLSIEKGDIYGIVGFSGAGKSTLVRTINLLQKPSAGDIEVDGTQFVKDGKQVISNKELQLKRRNIGMIFQGFNLLNETTVLENVAFALKHEKLSDDELEKKSLELLELVDLKEKANFYPSELSGGQKQRVAIARALANNPDILISDEATSALDPQNTQQILDLLKRLNKQFNLTVILITHEMDAVKKIATKVAVMEHGQVIEKGSLRQVFLHPKQELTKKFVGGSLEAISTLNSLHLDKLSKNESIYQLVYSVNNVAKSIIIELYKEIGVEVSMLYGNVELLNDEPIGTLVVLIKGDQEKQKQAKEFLQKQDVTLTRLDEKGNIYD.

One can recognise an ABC transporter domain in the interval 6–249 (LKNVDVDFPQ…PKQELTKKFV (244 aa)). ATP is bound at residue 41 to 48 (GFSGAGKS).

It belongs to the ABC transporter superfamily. Methionine importer (TC 3.A.1.24) family. In terms of assembly, the complex is composed of two ATP-binding proteins (MetN), two transmembrane proteins (MetI) and a solute-binding protein (MetQ).

Its subcellular location is the cell membrane. The catalysed reaction is L-methionine(out) + ATP + H2O = L-methionine(in) + ADP + phosphate + H(+). It carries out the reaction D-methionine(out) + ATP + H2O = D-methionine(in) + ADP + phosphate + H(+). In terms of biological role, part of the ABC transporter complex MetNIQ involved in methionine import. Responsible for energy coupling to the transport system. The chain is Methionine import ATP-binding protein MetN from Lactobacillus acidophilus (strain ATCC 700396 / NCK56 / N2 / NCFM).